We begin with the raw amino-acid sequence, 1193 residues long: Dynamin-like protein A (1193 aa).

The interval 1-609 (MTDQNRKELL…AFRERVKRLE (609 aa)) is D1, associates with and fuses membranes, tethers lipsomes. Residues 50–57 (GHYSAGKS) are G1 motif D1. The segment at 76 to 78 (TSA) is G2 motif D1. A G3 motif D1 region spans residues 141 to 144 (DTPG). Residues 199–202 (NQID) are G4 motif D1. The segment at 561-1193 (MPKSEIKMEQ…WKNSDNTIKM (633 aa)) is D2, does not associate with membranes. The tract at residues 619 to 626 (GGFSSGKS) is G1 motif D2. The interval 645 to 647 (TTA) is G2 motif D2. Residues 774 to 777 (DTPG) form a G3 motif D2 region. Residues 837–840 (NAAD) form a G4 motif D2 region.

The protein belongs to the TRAFAC class dynamin-like GTPase superfamily. Dynamin/Fzo/YdjA family. In terms of assembly, homodimer in solution. Both D1 and D2 domains interact with YwpG, YneK interacts only with D1 while RNase Y (rny) only interacts with whole protein. Probably oligomerizes at damaged membrane sites. Mg(2+) serves as cofactor.

The protein resides in the cell membrane. It carries out the reaction GTP + H2O = GDP + phosphate + H(+). Functionally, mediates lipid mixing of vesicles and full mixing of their contents in the absence and presence of GTP. Tethers and mixes small vesicles better than larger ones, indicating a curvature preference. GTP slows down DynA-mediated lipid fusion, perhaps controlling its activity. Prefers phospholipid composition close to the B.subtilis membrane; requires phosphatidylglycerol for fusion has no activity on pure phosphatidylethanolamine vesicles. Regulates membrane lipid diffusion. Required to prevent membrane damage when exposed to low levels of membrane-damaging antibiotics or to bacteriophage. Probably surveys the cell membrane for stress; localizes to sites of membrane damage (treatment with nisin) and forms foci in cells treated with pore-forming compounds (CCCP). May assist membrane repair, possibly by membrane tethering and fusion. Probably functions both in early and late cell division, affects the proper formation of the FtsZ ring. Plays a non-redundant role with flottilin (floT) in membrane dynamics and cell shape. Probably able to bend membranes. Tethers liposomes and mediates their fusion; this does not require GTPase activity or the presence of GTP. Both GTPase domains (dynamin-type G) are required for GTPase activity. In terms of biological role, has intrinsic affinity for membranes and membrane distortion capability; causes tubulation and membrane distortion when expressed in a Drosophila cell line. The chain is Dynamin-like protein A from Bacillus subtilis (strain 168).